Reading from the N-terminus, the 83-residue chain is NAD(P)H-quinone oxidoreductase subunit L (83 aa).

2 helical membrane passes run 18–38 (ILAY…ALFF) and 53–73 (LLVY…APFL).

Belongs to the complex I NdhL subunit family. In terms of assembly, NDH-1 can be composed of about 15 different subunits; different subcomplexes with different compositions have been identified which probably have different functions.

It localises to the cellular thylakoid membrane. The enzyme catalyses a plastoquinone + NADH + (n+1) H(+)(in) = a plastoquinol + NAD(+) + n H(+)(out). It catalyses the reaction a plastoquinone + NADPH + (n+1) H(+)(in) = a plastoquinol + NADP(+) + n H(+)(out). Functionally, NDH-1 shuttles electrons from an unknown electron donor, via FMN and iron-sulfur (Fe-S) centers, to quinones in the respiratory and/or the photosynthetic chain. The immediate electron acceptor for the enzyme in this species is believed to be plastoquinone. Couples the redox reaction to proton translocation, and thus conserves the redox energy in a proton gradient. Cyanobacterial NDH-1 also plays a role in inorganic carbon-concentration. This is NAD(P)H-quinone oxidoreductase subunit L from Parasynechococcus marenigrum (strain WH8102).